We begin with the raw amino-acid sequence, 140 residues long: MPLYQRIVAIDYGTKRIGVAKSDPLGMFAQPIGTVDRAGLSKLLSPMVEAGEVQLVVVGYPLNRHGEQTAMTEVIDRFIESLRLEFPALPIETINEHCSSKSAMQLLVASGTSRKERKTKGRLDTAAACLLLSDYLEQQK.

The protein belongs to the YqgF nuclease family.

The protein localises to the cytoplasm. Functionally, could be a nuclease involved in processing of the 5'-end of pre-16S rRNA. This is Putative pre-16S rRNA nuclease from Chlorobium chlorochromatii (strain CaD3).